We begin with the raw amino-acid sequence, 132 residues long: 3-aminoacrylate deaminase RutC (132 aa).

The protein belongs to the RutC family.

The catalysed reaction is (Z)-3-aminoacrylate + H2O + H(+) = 3-oxopropanoate + NH4(+). Functionally, involved in pyrimidine catabolism. Catalyzes the deamination of 3-aminoacrylate to malonic semialdehyde, a reaction that can also occur spontaneously. RutC may facilitate the reaction and modulate the metabolic fitness, rather than catalyzing essential functions. This chain is 3-aminoacrylate deaminase RutC, found in Cronobacter sakazakii (strain ATCC BAA-894) (Enterobacter sakazakii).